A 272-amino-acid chain; its full sequence is Phosphatidylglycerol--prolipoprotein diacylglyceryl transferase (272 aa).

The next 7 helical transmembrane spans lie at 17–37, 55–75, 90–110, 125–145, 174–194, 202–222, and 230–250; these read LQVH…WGLA, LVFY…VLFY, VWTG…AMLF, FIAP…FIGG, PSQI…LWWF, MAVS…MEFF, and GFIL…MLLI. A 1,2-diacyl-sn-glycero-3-phospho-(1'-sn-glycerol) is bound at residue Arg138.

The protein belongs to the Lgt family.

The protein localises to the cell inner membrane. The enzyme catalyses L-cysteinyl-[prolipoprotein] + a 1,2-diacyl-sn-glycero-3-phospho-(1'-sn-glycerol) = an S-1,2-diacyl-sn-glyceryl-L-cysteinyl-[prolipoprotein] + sn-glycerol 1-phosphate + H(+). The protein operates within protein modification; lipoprotein biosynthesis (diacylglyceryl transfer). Its function is as follows. Catalyzes the transfer of the diacylglyceryl group from phosphatidylglycerol to the sulfhydryl group of the N-terminal cysteine of a prolipoprotein, the first step in the formation of mature lipoproteins. The polypeptide is Phosphatidylglycerol--prolipoprotein diacylglyceryl transferase (Acinetobacter baumannii (strain SDF)).